The chain runs to 968 residues: Pumilio homolog 1 (968 aa).

2 disordered regions span residues 1–25 (MIPE…DYEK) and 138–171 (NNVL…TGAS). Ser194 carries the post-translational modification Phosphoserine. Disordered regions lie at residues 204-240 (GHGH…SQGI), 260-303 (GTPD…VTSG), and 360-382 (KSDQ…PHGS). Composition is skewed to polar residues over residues 211-220 (QQPSRPASRN) and 227-238 (DSNNNLSPSASQ). A Phosphothreonine modification is found at Thr261. Residues 291–303 (TSNQSPFNGVTSG) are compositionally biased toward polar residues. A PUM-HD domain is found at 610 to 950 (FGSSMLEEFK…HVVARIEKLV (341 aa)). 8 Pumilio repeats span residues 630–665 (EIAG…MVYE), 666–701 (EIMP…ELAE), 702–737 (KLFD…KMVK), 738–773 (ELDG…FIIS), 774–810 (TFFG…KVME), 811–846 (EILS…VIIK), 847–882 (ELAG…LLVN), and 883–924 (EMLG…LILT).

It localises to the cytoplasm. In terms of biological role, sequence-specific RNA-binding protein that regulates translation and mRNA stability by binding the 3'-UTR of target mRNAs. Binds the APUM-binding elements (APBEs) in the 3'-UTR mRNA sequence of CLV1, PNH, WUS and FAS2. This is Pumilio homolog 1 (APUM1) from Arabidopsis thaliana (Mouse-ear cress).